Reading from the N-terminus, the 227-residue chain is 27 kDa glycoprotein (227 aa).

The N-terminal stretch at 1-17 is a signal peptide; the sequence is MMWKTVLITIFAAGVLA. Asparagine 118 and asparagine 173 each carry an N-linked (GlcNAc...) asparagine glycan.

It belongs to the UPF0408 family. In terms of tissue distribution, expressed in the subesophageal body, fat bodies, hemocytes, midgut and Malpighian tubules. Not expressed in silk glands.

The protein localises to the secreted. In Bombyx mori (Silk moth), this protein is 27 kDa glycoprotein.